We begin with the raw amino-acid sequence, 216 residues long: Probable nicotinate-nucleotide adenylyltransferase (216 aa).

It belongs to the NadD family.

It carries out the reaction nicotinate beta-D-ribonucleotide + ATP + H(+) = deamido-NAD(+) + diphosphate. It participates in cofactor biosynthesis; NAD(+) biosynthesis; deamido-NAD(+) from nicotinate D-ribonucleotide: step 1/1. In terms of biological role, catalyzes the reversible adenylation of nicotinate mononucleotide (NaMN) to nicotinic acid adenine dinucleotide (NaAD). This chain is Probable nicotinate-nucleotide adenylyltransferase, found in Citrifermentans bemidjiense (strain ATCC BAA-1014 / DSM 16622 / JCM 12645 / Bem) (Geobacter bemidjiensis).